Consider the following 181-residue polypeptide: RING-H2 finger protein ATL72 (181 aa).

The chain crosses the membrane as a helical span at residues 34–54; it reads VIILAALLCALICALSLNSAL. An RING-type; atypical zinc finger spans residues 114 to 156; sequence CLICLGDFEDGEKVRVLPKCNHGFHVRCIDTWLLSRSSCPTCR.

This sequence belongs to the RING-type zinc finger family. ATL subfamily.

It is found in the membrane. The catalysed reaction is S-ubiquitinyl-[E2 ubiquitin-conjugating enzyme]-L-cysteine + [acceptor protein]-L-lysine = [E2 ubiquitin-conjugating enzyme]-L-cysteine + N(6)-ubiquitinyl-[acceptor protein]-L-lysine.. Its pathway is protein modification; protein ubiquitination. This is RING-H2 finger protein ATL72 (ATL72) from Arabidopsis thaliana (Mouse-ear cress).